Consider the following 245-residue polypeptide: Probable phosphatase PMI1003 (245 aa).

Zn(2+)-binding residues include H7, H9, H15, H40, E73, H101, H131, D192, and H194.

Belongs to the PHP family. Homotrimer. Zn(2+) serves as cofactor.

This chain is Probable phosphatase PMI1003, found in Proteus mirabilis (strain HI4320).